A 428-amino-acid chain; its full sequence is Histone deacetylase 3 (428 aa).

Positions 3–316 (KTVAYFYDPD…WTYETSLLVD (314 aa)) are histone deacetylase. 1D-myo-inositol 1,4,5,6-tetrakisphosphate-binding residues include His17, Gly21, and Lys25. His135 is an active-site residue. Residues Asp170, His172, and Asp259 each contribute to the Zn(2+) site. Arg265 contacts 1D-myo-inositol 1,4,5,6-tetrakisphosphate. Composition is skewed to basic and acidic residues over residues 386–405 (SYER…DNYS) and 415–428 (DGDH…DVEI). The interval 386 to 428 (SYERTDEPDPEERGSEDNYSRPEASNEFYDGDHDNDKESDVEI) is disordered.

It belongs to the histone deacetylase family. HD type 1 subfamily.

The protein localises to the nucleus. It is found in the chromosome. Its subcellular location is the cytoplasm. It localises to the cytosol. It catalyses the reaction N(6)-acetyl-L-lysyl-[histone] + H2O = L-lysyl-[histone] + acetate. The enzyme catalyses N(6)-acetyl-L-lysyl-[protein] + H2O = L-lysyl-[protein] + acetate. The catalysed reaction is N(6)-(2E)-butenoyl-L-lysyl-[protein] + H2O = (2E)-2-butenoate + L-lysyl-[protein]. It carries out the reaction N(6)-(2-hydroxyisobutanoyl)-L-lysyl-[protein] + H2O = 2-hydroxy-2-methylpropanoate + L-lysyl-[protein]. It catalyses the reaction N(6)-[(S)-lactoyl]-L-lysyl-[protein] + H2O = (S)-lactate + L-lysyl-[protein]. Inositol tetraphosphate (1D-myo-inositol 1,4,5,6-tetrakisphosphate) promotes the histone deacetylase activity by acting as an intermolecular glue between hdac3 and N-Cor repressor complex components. Functionally, histone deacetylase that catalyzes the deacetylation of lysine residues on the N-terminal part of the core histones (H2A, H2B, H3 and H4), and some other non-histone substrates. Histone deacetylation gives a tag for epigenetic repression and plays an important role in transcriptional regulation, cell cycle progression and developmental events. Histone deacetylases act via the formation of large multiprotein complexes, such as N-Cor repressor complex, which activate the histone deacetylase activity. Participates in the BCL6 transcriptional repressor activity by deacetylating the H3 'Lys-27' (H3K27) on enhancer elements, antagonizing EP300 acetyltransferase activity and repressing proximal gene expression. Also functions as a deacetylase for non-histone targets. In addition to protein deacetylase activity, also acts as a protein-lysine deacylase by recognizing other acyl groups: catalyzes removal of (2E)-butenoyl (crotonyl), lactoyl (lactyl) and 2-hydroxyisobutanoyl (2-hydroxyisobutyryl) acyl groups from lysine residues, leading to protein decrotonylation, delactylation and de-2-hydroxyisobutyrylation, respectively. This Xenopus tropicalis (Western clawed frog) protein is Histone deacetylase 3 (hdac3).